The chain runs to 138 residues: Proofreading thioesterase EntH (138 aa).

Residue glutamate 64 is the Nucleophile or proton acceptor of the active site.

This sequence belongs to the thioesterase PaaI family. As to quaternary structure, homotetramer. Dimer of dimers. Interacts specifically with the aryl carrier protein (ArCP) domain of EntB.

It is found in the cytoplasm. Its pathway is siderophore biosynthesis; enterobactin biosynthesis. Functionally, required for optimal enterobactin synthesis. Acts as a proofreading enzyme that prevents EntB misacylation by hydrolyzing the thioester bound existing between EntB and wrongly charged molecules. This is Proofreading thioesterase EntH from Citrobacter rodentium (strain ICC168) (Citrobacter freundii biotype 4280).